Reading from the N-terminus, the 502-residue chain is Glycerol kinase (502 aa).

Thr14 serves as a coordination point for ADP. Positions 14, 15, and 16 each coordinate ATP. Sn-glycerol 3-phosphate is bound at residue Thr14. Arg18 contacts ADP. Sn-glycerol 3-phosphate-binding residues include Arg84, Glu85, and Tyr136. The glycerol site is built by Arg84, Glu85, and Tyr136. His232 is subject to Phosphohistidine; by HPr. Asp246 contributes to the sn-glycerol 3-phosphate binding site. Glycerol-binding residues include Asp246 and Gln247. ADP is bound by residues Thr268 and Gly311. Residues Thr268, Gly311, Gln315, and Gly412 each coordinate ATP. 2 residues coordinate ADP: Gly412 and Asn416.

The protein belongs to the FGGY kinase family. Homotetramer and homodimer (in equilibrium). Post-translationally, the phosphoenolpyruvate-dependent sugar phosphotransferase system (PTS), including enzyme I, and histidine-containing protein (HPr) are required for the phosphorylation, which leads to the activation of the enzyme.

It carries out the reaction glycerol + ATP = sn-glycerol 3-phosphate + ADP + H(+). It functions in the pathway polyol metabolism; glycerol degradation via glycerol kinase pathway; sn-glycerol 3-phosphate from glycerol: step 1/1. Its activity is regulated as follows. Activated by phosphorylation and inhibited by fructose 1,6-bisphosphate (FBP). Functionally, key enzyme in the regulation of glycerol uptake and metabolism. Catalyzes the phosphorylation of glycerol to yield sn-glycerol 3-phosphate. The sequence is that of Glycerol kinase from Streptococcus gordonii (strain Challis / ATCC 35105 / BCRC 15272 / CH1 / DL1 / V288).